A 527-amino-acid polypeptide reads, in one-letter code: Probable protein kinase UbiB (527 aa).

The region spanning 118-501 (DFERVPVASA…QKRTNRLLQG (384 aa)) is the Protein kinase domain. ATP contacts are provided by residues 124-132 (VASASIAQV) and lysine 150. The active-site Proton acceptor is the aspartate 285. Residues 502-522 (LLMFGVAVGVGAVLARAWLAI) traverse the membrane as a helical segment.

This sequence belongs to the ABC1 family. UbiB subfamily.

The protein resides in the cell inner membrane. The protein operates within cofactor biosynthesis; ubiquinone biosynthesis [regulation]. In terms of biological role, is probably a protein kinase regulator of UbiI activity which is involved in aerobic coenzyme Q (ubiquinone) biosynthesis. The chain is Probable protein kinase UbiB from Paraburkholderia phymatum (strain DSM 17167 / CIP 108236 / LMG 21445 / STM815) (Burkholderia phymatum).